Reading from the N-terminus, the 334-residue chain is Thiamine thiazole synthase (334 aa).

Residues C86, 107–108 (EA), G115, and V183 contribute to the substrate site. C221 carries the 2,3-didehydroalanine (Cys) modification. Substrate contacts are provided by residues D223, H238, M290, and 300-302 (RMG).

Belongs to the THI4 family. In terms of assembly, homooctamer. Fe cation serves as cofactor. In terms of processing, during the catalytic reaction, a sulfide is transferred from Cys-221 to a reaction intermediate, generating a dehydroalanine residue.

It localises to the cytoplasm. The protein localises to the nucleus. The enzyme catalyses [ADP-thiazole synthase]-L-cysteine + glycine + NAD(+) = [ADP-thiazole synthase]-dehydroalanine + ADP-5-ethyl-4-methylthiazole-2-carboxylate + nicotinamide + 3 H2O + 2 H(+). Functionally, involved in biosynthesis of the thiamine precursor thiazole. Catalyzes the conversion of NAD and glycine to adenosine diphosphate 5-(2-hydroxyethyl)-4-methylthiazole-2-carboxylic acid (ADT), an adenylated thiazole intermediate. The reaction includes an iron-dependent sulfide transfer from a conserved cysteine residue of the protein to a thiazole intermediate. The enzyme can only undergo a single turnover, which suggests it is a suicide enzyme. May have additional roles in adaptation to various stress conditions and in DNA damage tolerance. The protein is Thiamine thiazole synthase of Ajellomyces capsulatus (strain G186AR / H82 / ATCC MYA-2454 / RMSCC 2432) (Darling's disease fungus).